The chain runs to 449 residues: Phosphoglucosamine mutase (449 aa).

S101 functions as the Phosphoserine intermediate in the catalytic mechanism. Residues S101, D243, D245, and D247 each contribute to the Mg(2+) site. S101 is modified (phosphoserine).

It belongs to the phosphohexose mutase family. It depends on Mg(2+) as a cofactor. Post-translationally, activated by phosphorylation.

The enzyme catalyses alpha-D-glucosamine 1-phosphate = D-glucosamine 6-phosphate. Its function is as follows. Catalyzes the conversion of glucosamine-6-phosphate to glucosamine-1-phosphate. In Syntrophus aciditrophicus (strain SB), this protein is Phosphoglucosamine mutase.